The chain runs to 220 residues: Inner membrane-spanning protein YciB (220 aa).

A run of 6 helical transmembrane segments spans residues 20 to 40 (EVPP…FFFA), 57 to 77 (IGAP…IALA), 86 to 106 (LPIM…LTLW), 123 to 143 (LFGA…GYVF), 156 to 176 (KLTL…EVVW), and 187 to 207 (FKVW…MPLI).

The protein belongs to the YciB family.

It is found in the cell inner membrane. Its function is as follows. Plays a role in cell envelope biogenesis, maintenance of cell envelope integrity and membrane homeostasis. This Brucella anthropi (strain ATCC 49188 / DSM 6882 / CCUG 24695 / JCM 21032 / LMG 3331 / NBRC 15819 / NCTC 12168 / Alc 37) (Ochrobactrum anthropi) protein is Inner membrane-spanning protein YciB.